The following is a 249-amino-acid chain: Segregation and condensation protein A (249 aa).

This sequence belongs to the ScpA family. In terms of assembly, component of a cohesin-like complex composed of ScpA, ScpB and the Smc homodimer, in which ScpA and ScpB bind to the head domain of Smc. The presence of the three proteins is required for the association of the complex with DNA.

It is found in the cytoplasm. Its function is as follows. Participates in chromosomal partition during cell division. May act via the formation of a condensin-like complex containing Smc and ScpB that pull DNA away from mid-cell into both cell halves. The polypeptide is Segregation and condensation protein A (Oceanobacillus iheyensis (strain DSM 14371 / CIP 107618 / JCM 11309 / KCTC 3954 / HTE831)).